We begin with the raw amino-acid sequence, 559 residues long: Malate synthase, glyoxysomal (559 aa).

R173 acts as the Proton acceptor in catalysis. The active-site Proton donor is D459. Positions 557–559 match the Microbody targeting signal motif; sequence CKL.

It belongs to the malate synthase family.

The protein localises to the glyoxysome. It catalyses the reaction glyoxylate + acetyl-CoA + H2O = (S)-malate + CoA + H(+). It participates in carbohydrate metabolism; glyoxylate cycle; (S)-malate from isocitrate: step 2/2. This Zea mays (Maize) protein is Malate synthase, glyoxysomal (LIP).